Here is a 275-residue protein sequence, read N- to C-terminus: ATP synthase subunit delta (275 aa).

The protein belongs to the ATPase delta chain family. As to quaternary structure, F-type ATPases have 2 components, F(1) - the catalytic core - and F(0) - the membrane proton channel. F(1) has five subunits: alpha(3), beta(3), gamma(1), delta(1), epsilon(1). F(0) has three main subunits: a(1), b(2) and c(10-14). The alpha and beta chains form an alternating ring which encloses part of the gamma chain. F(1) is attached to F(0) by a central stalk formed by the gamma and epsilon chains, while a peripheral stalk is formed by the delta and b chains.

It is found in the cell membrane. Its function is as follows. F(1)F(0) ATP synthase produces ATP from ADP in the presence of a proton or sodium gradient. F-type ATPases consist of two structural domains, F(1) containing the extramembraneous catalytic core and F(0) containing the membrane proton channel, linked together by a central stalk and a peripheral stalk. During catalysis, ATP synthesis in the catalytic domain of F(1) is coupled via a rotary mechanism of the central stalk subunits to proton translocation. Functionally, this protein is part of the stalk that links CF(0) to CF(1). It either transmits conformational changes from CF(0) to CF(1) or is implicated in proton conduction. In Arthrobacter sp. (strain FB24), this protein is ATP synthase subunit delta.